Here is a 78-residue protein sequence, read N- to C-terminus: Large ribosomal subunit protein bL28 (78 aa).

Residues 1–20 (MSRVCQVTGKRPVTGNNRSH) are disordered.

This sequence belongs to the bacterial ribosomal protein bL28 family.

The protein is Large ribosomal subunit protein bL28 of Photobacterium profundum (strain SS9).